The chain runs to 283 residues: Pantothenate synthetase (283 aa).

34 to 41 is an ATP binding site; the sequence is MGALHEGH. Histidine 41 (proton donor) is an active-site residue. Glutamine 65 serves as a coordination point for (R)-pantoate. Beta-alanine is bound at residue glutamine 65. 152-155 serves as a coordination point for ATP; it reads GQKD. Glutamine 158 lines the (R)-pantoate pocket. Residues valine 181 and 189–192 contribute to the ATP site; that span reads MSSR.

This sequence belongs to the pantothenate synthetase family. In terms of assembly, homodimer.

The protein resides in the cytoplasm. It catalyses the reaction (R)-pantoate + beta-alanine + ATP = (R)-pantothenate + AMP + diphosphate + H(+). The protein operates within cofactor biosynthesis; (R)-pantothenate biosynthesis; (R)-pantothenate from (R)-pantoate and beta-alanine: step 1/1. In terms of biological role, catalyzes the condensation of pantoate with beta-alanine in an ATP-dependent reaction via a pantoyl-adenylate intermediate. In Nitrobacter winogradskyi (strain ATCC 25391 / DSM 10237 / CIP 104748 / NCIMB 11846 / Nb-255), this protein is Pantothenate synthetase.